Reading from the N-terminus, the 213-residue chain is Pyridoxine/pyridoxamine 5'-phosphate oxidase (213 aa).

Substrate contacts are provided by residues 8-11 (RREY) and Lys-66. Residues 61–66 (RIVLLK), 76–77 (YT), Arg-82, Lys-83, and Gln-105 each bind FMN. The substrate site is built by Tyr-123, Arg-127, and Ser-131. FMN-binding positions include 140–141 (QS) and Trp-185. 191–193 (RLH) lines the substrate pocket. Arg-195 serves as a coordination point for FMN.

Belongs to the pyridoxamine 5'-phosphate oxidase family. Homodimer. It depends on FMN as a cofactor.

It carries out the reaction pyridoxamine 5'-phosphate + O2 + H2O = pyridoxal 5'-phosphate + H2O2 + NH4(+). The catalysed reaction is pyridoxine 5'-phosphate + O2 = pyridoxal 5'-phosphate + H2O2. The protein operates within cofactor metabolism; pyridoxal 5'-phosphate salvage; pyridoxal 5'-phosphate from pyridoxamine 5'-phosphate: step 1/1. It functions in the pathway cofactor metabolism; pyridoxal 5'-phosphate salvage; pyridoxal 5'-phosphate from pyridoxine 5'-phosphate: step 1/1. Functionally, catalyzes the oxidation of either pyridoxine 5'-phosphate (PNP) or pyridoxamine 5'-phosphate (PMP) into pyridoxal 5'-phosphate (PLP). This chain is Pyridoxine/pyridoxamine 5'-phosphate oxidase, found in Pseudoalteromonas atlantica (strain T6c / ATCC BAA-1087).